The primary structure comprises 249 residues: Probable septum site-determining protein MinC (249 aa).

Residues 117 to 138 (AVRPPQPPPPPHARAEPAAPVA) are disordered.

Belongs to the MinC family. Interacts with MinD and FtsZ.

Cell division inhibitor that blocks the formation of polar Z ring septums. Rapidly oscillates between the poles of the cell to destabilize FtsZ filaments that have formed before they mature into polar Z rings. Prevents FtsZ polymerization. This is Probable septum site-determining protein MinC from Xanthomonas campestris pv. campestris (strain 8004).